Here is a 75-residue protein sequence, read N- to C-terminus: U6-lycotoxin-Ls1b (75 aa).

An N-terminal signal peptide occupies residues 1–21 (MKLLLFTALVLVVISLIEVEA). The propeptide occupies 22–25 (ENER).

This sequence belongs to the neurotoxin 19 (CSTX) family. 06 (U6-Lctx) subfamily. Post-translationally, contains 4 disulfide bonds. As to expression, expressed by the venom gland.

It is found in the secreted. In Lycosa singoriensis (Wolf spider), this protein is U6-lycotoxin-Ls1b.